Reading from the N-terminus, the 605-residue chain is Capsid scaffolding protein (605 aa).

Catalysis depends on charge relay system residues H48, S116, and H139. Positions 235-274 (ASDAPDLQKPDKALQSPPPASTDPATMLSGNAGEGATACG) are disordered. Positions 281-300 (QDLISVPRNTFMTLLQTNLD) are interaction with pAP. 2 disordered regions span residues 403 to 432 (DYVP…PGED) and 489 to 588 (PHQS…KSVS). Residues 410 to 416 (RSNKRKR) carry the Nuclear localization signal motif. The span at 568 to 579 (ASASGVAQSKEP) shows a compositional bias: polar residues. The tract at residues 585–605 (KSVSAHLKSIFCEELLNKRVA) is interaction with major capsid protein.

The protein belongs to the herpesviridae capsid scaffolding protein family. Homomultimer. Interacts with major capsid protein. As to quaternary structure, exists in a monomer-dimer equilibrium with the dimer being the active species. Capsid scaffolding protein is cleaved by assemblin after formation of the spherical procapsid. As a result, the capsid obtains its mature, icosahedral shape. Cleavages occur at two or more sites: release (R-site) and maturation (M-site).

The protein resides in the host cytoplasm. Its subcellular location is the host nucleus. It carries out the reaction Cleaves -Ala-|-Ser- and -Ala-|-Ala- bonds in the scaffold protein.. Functionally, acts as a scaffold protein by binding major capsid protein in the cytoplasm, inducing the nuclear localization of both proteins. Multimerizes in the nucleus such as major capsid protein forms the icosahedral T=16 capsid. Autocatalytic cleavage releases the assembly protein, and subsequently abolishes interaction with major capsid protein. Cleavages products are evicted from the capsid before or during DNA packaging. Protease that plays an essential role in virion assembly within the nucleus. Catalyzes the cleavage of the assembly protein after formation of the spherical procapsid. By that cleavage, the capsid matures and gains its icosahedral shape. The cleavage sites seem to include -Ala-Ser-, -Ala-Ala-, as well as Ala-Thr bonds. Assemblin and cleavages products are evicted from the capsid before or during DNA packaging. In terms of biological role, plays a major role in capsid assembly. Acts as a scaffold protein by binding major capsid protein. Multimerizes in the nucleus such as major capsid protein forms the icosahedral T=16 capsid. Cleaved by assemblin after capsid completion. The cleavages products are evicted from the capsid before or during DNA packaging. In Homo sapiens (Human), this protein is Capsid scaffolding protein.